A 241-amino-acid polypeptide reads, in one-letter code: Homeobox protein TGIF2LX (241 aa).

Disordered stretches follow at residues 1–58 (MEAA…GNLP) and 126–210 (TGKD…SPEE). Residues 21-39 (AKTQSPAQDTSIMSRNNAD) are compositionally biased toward polar residues. The homeobox; TALE-type DNA-binding region spans 48–111 (EHKKKRKGNL…INARRRILPD (64 aa)). Residues 195–206 (VSVTSPSSPELV) are compositionally biased toward low complexity.

Belongs to the TALE/TGIF homeobox family. As to expression, specifically expressed in adult testis.

It is found in the nucleus. Its function is as follows. May have a transcription role in testis. The protein is Homeobox protein TGIF2LX (TGIF2LX) of Homo sapiens (Human).